A 481-amino-acid polypeptide reads, in one-letter code: Proline--tRNA ligase (481 aa).

The protein belongs to the class-II aminoacyl-tRNA synthetase family. ProS type 3 subfamily. As to quaternary structure, homodimer.

It is found in the cytoplasm. It carries out the reaction tRNA(Pro) + L-proline + ATP = L-prolyl-tRNA(Pro) + AMP + diphosphate. Its function is as follows. Catalyzes the attachment of proline to tRNA(Pro) in a two-step reaction: proline is first activated by ATP to form Pro-AMP and then transferred to the acceptor end of tRNA(Pro). The chain is Proline--tRNA ligase from Chlorobium phaeobacteroides (strain DSM 266 / SMG 266 / 2430).